A 253-amino-acid chain; its full sequence is Uridine phosphorylase (253 aa).

It belongs to the PNP/UDP phosphorylase family. As to quaternary structure, homohexamer.

It is found in the cytoplasm. The enzyme catalyses uridine + phosphate = alpha-D-ribose 1-phosphate + uracil. Its pathway is pyrimidine metabolism; UMP biosynthesis via salvage pathway; uracil from uridine (phosphorylase route): step 1/1. Catalyzes the reversible phosphorylytic cleavage of uridine to uracil and ribose-1-phosphate. Shows weak activity towards deoxyuridine and thymidine. The produced molecules are then utilized as carbon and energy sources or in the rescue of pyrimidine bases for nucleotide synthesis. The chain is Uridine phosphorylase from Escherichia coli (strain K12).